A 423-amino-acid chain; its full sequence is COUP transcription factor 1 (423 aa).

The disordered stretch occupies residues 1–81 (MAMVVSSWRD…QGPPGSGQSQ (81 aa)). Positions 39–67 (EQQQQAGSGAPHTPQTPGQPGAPATPGTA) are enriched in low complexity. Residues 83 to 158 (HIECVVCGDK…VGMRREAVQR (76 aa)) constitute a DNA-binding region (nuclear receptor). NR C4-type zinc fingers lie at residues 86–106 (CVVCGDKSSGKHYGQFTCEGC) and 122–146 (CRANRNCPIDQHHRNQCQYCRLKKC). The 227-residue stretch at 184-410 (YLSGYISLLL…TLIRDMLLSG (227 aa)) folds into the NR LBD domain.

It belongs to the nuclear hormone receptor family. NR2 subfamily. Binds DNA as dimer; homodimer and probable heterodimer with NR2F6. Interacts with GTF2B; this interaction is direct. Interacts with COPS2.

It localises to the nucleus. In terms of biological role, coup (chicken ovalbumin upstream promoter) transcription factor binds to the ovalbumin promoter and, in conjunction with another protein (S300-II) stimulates initiation of transcription. Binds to both direct repeats and palindromes of the 5'-AGGTCA-3' motif. Represses transcriptional activity of LHCG. In Homo sapiens (Human), this protein is COUP transcription factor 1 (NR2F1).